Consider the following 132-residue polypeptide: MEAIKADITQGLEKGSLITCADNTGARELKITSVMGYQGRKNRHPKAGLGDTITVSVTKGTPEMRRQVLEAVVVRQRKPIRRPDGTRVKFEDNAAVIIDDLGEPRGTEIKGPISREVAERYGTIASTATMIV.

The protein belongs to the universal ribosomal protein uL14 family. As to quaternary structure, part of the 50S ribosomal subunit. Forms a cluster with proteins L3 and L24e, part of which may contact the 16S rRNA in 2 intersubunit bridges.

In terms of biological role, binds to 23S rRNA. Forms part of two intersubunit bridges in the 70S ribosome. This chain is Large ribosomal subunit protein uL14, found in Halobacterium salinarum (strain ATCC 29341 / DSM 671 / R1).